A 248-amino-acid polypeptide reads, in one-letter code: uncharacterized protein (248 aa).

Residue 9-33 (IITGASSGIGKATALLLAEKGAKLV) participates in NADP(+) binding. S141 is a substrate binding site. Y154 serves as the catalytic Proton acceptor.

Belongs to the short-chain dehydrogenases/reductases (SDR) family.

This is an uncharacterized protein from Listeria monocytogenes serovar 1/2a (strain ATCC BAA-679 / EGD-e).